A 158-amino-acid chain; its full sequence is uncharacterized protein (158 aa).

The HTH asnC-type domain maps to 12-73 (LDEIDRAILR…LINPFKAGYE (62 aa)). Residues 31–50 (YSEISRRINVPESTVRARVN) constitute a DNA-binding region (H-T-H motif).

This is an uncharacterized protein from Pyrococcus abyssi (strain GE5 / Orsay).